The chain runs to 255 residues: tRNA pseudouridine synthase A (255 aa).

The active-site Nucleophile is the Asp-56. A substrate-binding site is contributed by Tyr-114.

The protein belongs to the tRNA pseudouridine synthase TruA family. Homodimer.

The enzyme catalyses uridine(38/39/40) in tRNA = pseudouridine(38/39/40) in tRNA. Formation of pseudouridine at positions 38, 39 and 40 in the anticodon stem and loop of transfer RNAs. This Methylacidiphilum infernorum (isolate V4) (Methylokorus infernorum (strain V4)) protein is tRNA pseudouridine synthase A.